The sequence spans 1060 residues: Protocadherin-1 (1060 aa).

The signal sequence occupies residues 1–57 (MDSGAGGRRCPEAALLILGPPRMEHLRHSPGPGGQRLLLPSMLLALLLLLAPSPGHA). Cadherin domains are found at residues 58–168 (TRVV…TPNF), 169–280 (ASPV…APKF), 281–387 (ERPS…APTI), 396–506 (THQD…APVF), 507–612 (TQSV…DPKF), 613–715 (MLSG…APYI), and 718–844 (PSNT…DPEY). Residues 58 to 852 (TRVVYKVPEE…EYERSKQRGN (795 aa)) are Extracellular-facing. N-linked (GlcNAc...) asparagine glycosylation is found at Asn-305 and Asn-403. Residues Asn-618, Asn-662, Asn-813, and Asn-818 are each glycosylated (N-linked (GlcNAc...) asparagine). The helical transmembrane segment at 853–873 (ILFGVVAGVVAVALLIALAVL) threads the bilayer. The Cytoplasmic segment spans residues 874-1060 (VRYCRQREAK…HGAIWTEVWE (187 aa)). Residues 884–897 (SGYQAGKKETKDLY) show a composition bias toward basic and acidic residues. Residues 884–1045 (SGYQAGKKET…QPFQLSTPQP (162 aa)) form a disordered region. Over residues 907–920 (KGNKSKGKKSKSPK) the composition is skewed to basic residues. Residues Ser-918, Ser-949, Ser-962, and Ser-984 each carry the phosphoserine modification. The segment covering 973–986 (SPLPSIQLQPQSPS) has biased composition (low complexity). 2 stretches are compositionally biased toward polar residues: residues 1003 to 1024 (FVGT…SYRT) and 1033 to 1043 (QVGQPFQLSTP).

Highly expressed in the brain and neuro-glial cells.

It is found in the cell junction. It localises to the cell membrane. Functionally, may be involved in cell-cell interaction processes and in cell adhesion. This chain is Protocadherin-1 (PCDH1), found in Homo sapiens (Human).